A 354-amino-acid chain; its full sequence is Probable L-ascorbate-6-phosphate lactonase UlaG (354 aa).

Belongs to the UlaG family. A divalent metal cation serves as cofactor.

It is found in the cytoplasm. It carries out the reaction L-ascorbate 6-phosphate + H2O = 3-dehydro-L-gulonate 6-phosphate. It participates in cofactor degradation; L-ascorbate degradation; D-xylulose 5-phosphate from L-ascorbate: step 1/4. Probably catalyzes the hydrolysis of L-ascorbate-6-P into 3-keto-L-gulonate-6-P. Is essential for L-ascorbate utilization under anaerobic conditions. This is Probable L-ascorbate-6-phosphate lactonase UlaG from Shigella flexneri.